Reading from the N-terminus, the 77-residue chain is MRQTRVEVILPPQGVLQPCEAPELGRVDTVRDLLNQTLGWRFAYEQCAAQVRCVAAWAQAASVGQPWSADGCGEEAE.

This is an uncharacterized protein from Xylella fastidiosa (strain 9a5c).